We begin with the raw amino-acid sequence, 269 residues long: tRNA-cytidine(32) 2-sulfurtransferase (269 aa).

The short motif at 53–58 (SGGKDS) is the PP-loop motif element. C128, C131, and C218 together coordinate [4Fe-4S] cluster.

It belongs to the TtcA family. As to quaternary structure, homodimer. It depends on Mg(2+) as a cofactor. The cofactor is [4Fe-4S] cluster.

The protein localises to the cytoplasm. It catalyses the reaction cytidine(32) in tRNA + S-sulfanyl-L-cysteinyl-[cysteine desulfurase] + AH2 + ATP = 2-thiocytidine(32) in tRNA + L-cysteinyl-[cysteine desulfurase] + A + AMP + diphosphate + H(+). Its pathway is tRNA modification. Catalyzes the ATP-dependent 2-thiolation of cytidine in position 32 of tRNA, to form 2-thiocytidine (s(2)C32). The sulfur atoms are provided by the cysteine/cysteine desulfurase (IscS) system. In Pelobacter propionicus (strain DSM 2379 / NBRC 103807 / OttBd1), this protein is tRNA-cytidine(32) 2-sulfurtransferase.